Consider the following 443-residue polypeptide: MESLASLYKNHIATLQERTRDALARFKLDALLIHSGELFNVFLDDHPYPFKVNPQFKAWVPVTQVPNCWLLVDGVNKPKLWFYLPVDYWHNVEPLPTSFWTEDVEVIALPKADGIGSLLPAARGNIGYIGPVPERALQLGIEASNINPKGVIDYLHYYRSFKTEYELACMREAQKMAVNGHRAAEEAFRSGMSEFDINIAYLTATGHRDTDVPYSNIVALNEHAAVLHYTKLDHQAPEEMRSFLLDAGAEYNGYAADLTRTWSAKSDNDYAQLVKDVNDEQLALIATMKAGVSYVDYHIQFHQRIAKLLRKHQIITDMSEEAMVENDLTGPFMPHGIGHPLGLQVHDVAGFMQDDSGTHLAAPAKYPYLRYTRILQPGMVLTIEPGIYFIESLLAPWREGQFSKHFNWQKIEALKPFGGIRIEDNVVIHENNVENMTRDLKLA.

The Mn(2+) site is built by aspartate 246, aspartate 257, histidine 339, glutamate 384, and glutamate 423.

The protein belongs to the peptidase M24B family. Bacterial-type prolidase subfamily. Mn(2+) serves as cofactor.

It catalyses the reaction Xaa-L-Pro dipeptide + H2O = an L-alpha-amino acid + L-proline. Splits dipeptides with a prolyl residue in the C-terminal position. The chain is Xaa-Pro dipeptidase from Shigella flexneri.